Reading from the N-terminus, the 724-residue chain is Catalase-peroxidase (724 aa).

A cross-link (tryptophyl-tyrosyl-methioninium (Trp-Tyr) (with M-252)) is located at residues 98–226; it reads WHSAGTYRIA…LAAVMMGLIY (129 aa). The active-site Proton acceptor is His-99. A cross-link (tryptophyl-tyrosyl-methioninium (Tyr-Met) (with W-98)) is located at residues 226–252; it reads YVNPEGVDGNPDPLKTAQDMRVTFARM. Position 267 (His-267) interacts with heme b.

Belongs to the peroxidase family. Peroxidase/catalase subfamily. Homodimer or homotetramer. Heme b serves as cofactor. Formation of the three residue Trp-Tyr-Met cross-link is important for the catalase, but not the peroxidase activity of the enzyme.

It catalyses the reaction H2O2 + AH2 = A + 2 H2O. The enzyme catalyses 2 H2O2 = O2 + 2 H2O. Bifunctional enzyme with both catalase and broad-spectrum peroxidase activity. The sequence is that of Catalase-peroxidase from Vibrio cholerae serotype O1 (strain ATCC 39315 / El Tor Inaba N16961).